The following is a 292-amino-acid chain: MNIRGAPDLGQPSDDPNSGGERERIRQRMKMVIGQLEGILRELKEVAKELREVVSQIDKLTSDFDFELEPDDWTTATVSSTSSSDKAGVGGPFDLGHLDFMTADILSDSWEFCSFLDVSTPSDSVDGPEAPRPGTGPDYQLMNGGLPIPNGPRVETPDSSSEEAFSAGPAKGQVPQRTPGTRERVRFSDKVLYHALCCDDEEGDGEEGEEEEEGDLAPELPRVEPHTGPLKPSPAPYKTKRSPLTTRRLGPTLAPEQTRRVTRNSSTQTVSDKSTQTVLPYTATKQKAKGKN.

The segment at 1 to 25 (MNIRGAPDLGQPSDDPNSGGERERI) is disordered. Residues 30–63 (KMVIGQLEGILRELKEVAKELREVVSQIDKLTSD) adopt a coiled-coil conformation. Positions 120–292 (TPSDSVDGPE…ATKQKAKGKN (173 aa)) are disordered. Residues 180–192 (GTRERVRFSDKVL) show a composition bias toward basic and acidic residues. The span at 198–216 (CDDEEGDGEEGEEEEEGDL) shows a compositional bias: acidic residues. A compositionally biased stretch (polar residues) spans 263 to 285 (RNSSTQTVSDKSTQTVLPYTATK).

It belongs to the INSYN1 family. Interacts with GPHN.

It is found in the postsynaptic density. In terms of biological role, component of the protein machinery at the inhibitory synapses, probably acting as a scaffold. Inhibitory synapses dampen neuronal activity through postsynaptic hyperpolarization. This synaptic inhibition is fundamental for the functioning of the central nervous system, shaping and orchestrating the flow of information through neuronal networks to generate a precise neural code. This Mus musculus (Mouse) protein is Inhibitory synaptic factor 1 (Insyn1).